The primary structure comprises 316 residues: Porphobilinogen deaminase (316 aa).

C245 bears the S-(dipyrrolylmethanemethyl)cysteine mark.

The protein belongs to the HMBS family. Monomer. Dipyrromethane serves as cofactor.

The enzyme catalyses 4 porphobilinogen + H2O = hydroxymethylbilane + 4 NH4(+). Its pathway is porphyrin-containing compound metabolism; protoporphyrin-IX biosynthesis; coproporphyrinogen-III from 5-aminolevulinate: step 2/4. The protein operates within porphyrin-containing compound metabolism; chlorophyll biosynthesis. In terms of biological role, tetrapolymerization of the monopyrrole PBG into the hydroxymethylbilane pre-uroporphyrinogen in several discrete steps. The chain is Porphobilinogen deaminase from Prochlorococcus marinus (strain AS9601).